The sequence spans 642 residues: Threonine--tRNA ligase (642 aa).

The TGS domain maps to 1 to 61; the sequence is MPVITLPDGS…ENDAQLSIIT (61 aa). Positions 243–534 are catalytic; sequence DHRKIGKQLD…LTEEFAGFFP (292 aa). Residue lysine 286 is modified to N6-acetyllysine. Zn(2+)-binding residues include cysteine 334, histidine 385, and histidine 511.

The protein belongs to the class-II aminoacyl-tRNA synthetase family. As to quaternary structure, homodimer. Requires Zn(2+) as cofactor.

The protein localises to the cytoplasm. It carries out the reaction tRNA(Thr) + L-threonine + ATP = L-threonyl-tRNA(Thr) + AMP + diphosphate + H(+). Functionally, catalyzes the attachment of threonine to tRNA(Thr) in a two-step reaction: L-threonine is first activated by ATP to form Thr-AMP and then transferred to the acceptor end of tRNA(Thr). Also edits incorrectly charged L-seryl-tRNA(Thr). In Escherichia coli O157:H7, this protein is Threonine--tRNA ligase.